We begin with the raw amino-acid sequence, 172 residues long: Caltractin (172 aa).

The interval M1–Q23 is disordered. The span at T12 to K21 shows a compositional bias: polar residues. 4 EF-hand domains span residues E29–E64, P65–E99, D101–N136, and M137–F172. Ca(2+) contacts are provided by D42, D44, S46, K48, and E53.

It belongs to the centrin family. As to quaternary structure, monomer.

The protein localises to the cytoplasm. Its subcellular location is the cytoskeleton. The protein resides in the microtubule organizing center. It localises to the centrosome. Plays a fundamental role in microtubule-organizing center structure and function. This is Caltractin (CTN) from Naegleria gruberi (Amoeba).